We begin with the raw amino-acid sequence, 124 residues long: Nucleoid-associated protein Noca_0318 (124 aa).

Belongs to the YbaB/EbfC family. Homodimer.

Its subcellular location is the cytoplasm. It localises to the nucleoid. Functionally, binds to DNA and alters its conformation. May be involved in regulation of gene expression, nucleoid organization and DNA protection. The polypeptide is Nucleoid-associated protein Noca_0318 (Nocardioides sp. (strain ATCC BAA-499 / JS614)).